The sequence spans 271 residues: Type III pantothenate kinase (271 aa).

Position 5–12 (5–12 (DISNSVTK)) interacts with ATP. Substrate-binding positions include Tyr-85 and 92–95 (GADR). Asp-94 (proton acceptor) is an active-site residue. Residue Asp-114 participates in K(+) binding. Position 117 (Thr-117) interacts with ATP. Substrate is bound at residue Thr-169.

This sequence belongs to the type III pantothenate kinase family. As to quaternary structure, homodimer. Requires NH4(+) as cofactor. The cofactor is K(+).

The protein localises to the cytoplasm. It catalyses the reaction (R)-pantothenate + ATP = (R)-4'-phosphopantothenate + ADP + H(+). Its pathway is cofactor biosynthesis; coenzyme A biosynthesis; CoA from (R)-pantothenate: step 1/5. Functionally, catalyzes the phosphorylation of pantothenate (Pan), the first step in CoA biosynthesis. This Methylacidiphilum infernorum (isolate V4) (Methylokorus infernorum (strain V4)) protein is Type III pantothenate kinase.